The chain runs to 96 residues: MPKVIVANINAEFEGIENETIMQILYRNGIEIDSACGGHGQCTSCKVLIISGSENLYPAEFEEKDTLEENGMDPETERLSCQAKLNGKGDVVIYLP.

One can recognise a 2Fe-2S ferredoxin-type domain in the interval 2–96 (PKVIVANINA…GKGDVVIYLP (95 aa)). Residues C36, C42, C45, and C81 each coordinate [2Fe-2S] cluster.

It belongs to the adrenodoxin/putidaredoxin family. Requires [2Fe-2S] cluster as cofactor.

In terms of biological role, may be involved in the assembly of iron-sulfur clusters (Isc-Fd). This is 2Fe-2S ferredoxin-5 (fdx5) from Aquifex aeolicus (strain VF5).